Consider the following 359-residue polypeptide: MLENRVKTKQIFIGGVAIGGDAPISTQSMTFSKTADIESTKNQIDRLKLAGADLVRVAVSNEKDALALKELKKVSPLPLIADIHFHYKFALIAAQSVDAIRINPGNIGSKDKIKAVVDACKEKNIPIRIGVNAGSLEKRFDQKYGPTPKGMVESALYNAKLLEDLDFTDFKISLKASDVMRTIEAYRMLRPLVIYPFHLGVTEAGNLFSSSIKSAMALGGLLMEGIGDTMRVSITGELENEIKVARAILRHSGRLKEGINWISCPTCGRIEANLVDMASKVEKRLSHIKTPLDISVMGCVVNALGEAKHADMAIAFGNRSGLIIKEGKVIHKLAEKDLFETFVIEVENLAKEREKSLKD.

[4Fe-4S] cluster contacts are provided by Cys-264, Cys-267, Cys-299, and Glu-306.

This sequence belongs to the IspG family. Requires [4Fe-4S] cluster as cofactor.

It catalyses the reaction (2E)-4-hydroxy-3-methylbut-2-enyl diphosphate + oxidized [flavodoxin] + H2O + 2 H(+) = 2-C-methyl-D-erythritol 2,4-cyclic diphosphate + reduced [flavodoxin]. It functions in the pathway isoprenoid biosynthesis; isopentenyl diphosphate biosynthesis via DXP pathway; isopentenyl diphosphate from 1-deoxy-D-xylulose 5-phosphate: step 5/6. In terms of biological role, converts 2C-methyl-D-erythritol 2,4-cyclodiphosphate (ME-2,4cPP) into 1-hydroxy-2-methyl-2-(E)-butenyl 4-diphosphate. The sequence is that of 4-hydroxy-3-methylbut-2-en-1-yl diphosphate synthase (flavodoxin) from Helicobacter pylori (strain P12).